The sequence spans 263 residues: Regulatory protein RecX (263 aa).

Belongs to the RecX family.

It is found in the cytoplasm. In terms of biological role, modulates RecA activity. The protein is Regulatory protein RecX of Bacillus licheniformis (strain ATCC 14580 / DSM 13 / JCM 2505 / CCUG 7422 / NBRC 12200 / NCIMB 9375 / NCTC 10341 / NRRL NRS-1264 / Gibson 46).